Reading from the N-terminus, the 400-residue chain is ELAV-like protein 4 (400 aa).

The tract at residues 12-48 (TMEPQVSNGPTSNTSNGPSSNSRNCPSPMQTGAATDD) is disordered. Over residues 18–33 (SNGPTSNTSNGPSSNS) the composition is skewed to low complexity. Over residues 34–44 (RNCPSPMQTGA) the composition is skewed to polar residues. RRM domains follow at residues 51–158 (TNLI…YARP), 166–246 (ANLY…FANN), and 317–395 (WCIF…FKTN).

The protein belongs to the RRM elav family.

It localises to the cytoplasm. The protein localises to the perikaryon. Its subcellular location is the cell projection. It is found in the axon. The protein resides in the dendrite. It localises to the growth cone. RNA-binding protein that is involved in the post-transcriptional regulation of mRNAs. Plays a role in the regulation of mRNA stability, alternative splicing and translation. Binds to AU-rich element (ARE) sequences in the 3' untranslated region (3'UTR) of target mRNAs. Mainly plays a role in neuron-specific RNA processing. The chain is ELAV-like protein 4 (elavl4) from Xenopus tropicalis (Western clawed frog).